The chain runs to 155 residues: Protein SprT-like (155 aa).

The region spanning 7–144 (QRHMEEVSLQ…CGSCGGKLKQ (138 aa)) is the SprT-like domain. Histidine 67 contributes to the Zn(2+) binding site. Residue glutamate 68 is part of the active site. Histidine 71 is a binding site for Zn(2+).

Belongs to the SprT family. Zn(2+) serves as cofactor.

Its subcellular location is the cytoplasm. This chain is Protein SprT-like, found in Listeria welshimeri serovar 6b (strain ATCC 35897 / DSM 20650 / CCUG 15529 / CIP 8149 / NCTC 11857 / SLCC 5334 / V8).